The primary structure comprises 152 residues: FMN reductase (NADH) RutF (152 aa).

Belongs to the non-flavoprotein flavin reductase family. RutF subfamily.

It catalyses the reaction FMNH2 + NAD(+) = FMN + NADH + 2 H(+). Catalyzes the reduction of FMN to FMNH2 which is used to reduce pyrimidine by RutA via the Rut pathway. The protein is FMN reductase (NADH) RutF of Shigella sonnei (strain Ss046).